The primary structure comprises 62 residues: Conotoxin Pn-B02 (62 aa).

The N-terminal stretch at 1–19 (MRCLPVFIILLLLIASAPS) is a signal peptide. Residues 20–49 (FDALPKTEDNVPLSSFHDNLKRTRRIHLNI) constitute a propeptide that is removed on maturation. Ala61 carries the alanine amide modification.

The protein belongs to the conotoxin T superfamily. Contains 2 disulfide bonds that can be either 'C1-C3, C2-C4' or 'C1-C4, C2-C3', since these disulfide connectivities have been observed for conotoxins with cysteine framework V (for examples, see AC P0DQQ7 and AC P81755). In terms of tissue distribution, expressed by the venom duct.

Its subcellular location is the secreted. The chain is Conotoxin Pn-B02 from Conus pennaceus (Feathered cone).